A 260-amino-acid polypeptide reads, in one-letter code: Imidazole glycerol phosphate synthase subunit HisF (260 aa).

Catalysis depends on residues Asp-11 and Asp-130.

It belongs to the HisA/HisF family. In terms of assembly, heterodimer of HisH and HisF.

It is found in the cytoplasm. It carries out the reaction 5-[(5-phospho-1-deoxy-D-ribulos-1-ylimino)methylamino]-1-(5-phospho-beta-D-ribosyl)imidazole-4-carboxamide + L-glutamine = D-erythro-1-(imidazol-4-yl)glycerol 3-phosphate + 5-amino-1-(5-phospho-beta-D-ribosyl)imidazole-4-carboxamide + L-glutamate + H(+). It functions in the pathway amino-acid biosynthesis; L-histidine biosynthesis; L-histidine from 5-phospho-alpha-D-ribose 1-diphosphate: step 5/9. IGPS catalyzes the conversion of PRFAR and glutamine to IGP, AICAR and glutamate. The HisF subunit catalyzes the cyclization activity that produces IGP and AICAR from PRFAR using the ammonia provided by the HisH subunit. The protein is Imidazole glycerol phosphate synthase subunit HisF of Thermomicrobium roseum (strain ATCC 27502 / DSM 5159 / P-2).